Reading from the N-terminus, the 410-residue chain is Multifunctional CCA protein (410 aa).

Residues Gly-8 and Arg-11 each contribute to the ATP site. Positions 8 and 11 each coordinate CTP. Asp-21 and Asp-23 together coordinate Mg(2+). Residues Arg-91, Arg-137, and Arg-140 each contribute to the ATP site. Residues Arg-91, Arg-137, and Arg-140 each contribute to the CTP site. The 102-residue stretch at 225 to 326 (SGIHTLMTLQ…LNVLKKTDAF (102 aa)) folds into the HD domain.

This sequence belongs to the tRNA nucleotidyltransferase/poly(A) polymerase family. Bacterial CCA-adding enzyme type 1 subfamily. As to quaternary structure, monomer. Can also form homodimers and oligomers. Mg(2+) is required as a cofactor. Ni(2+) serves as cofactor.

It carries out the reaction a tRNA precursor + 2 CTP + ATP = a tRNA with a 3' CCA end + 3 diphosphate. The catalysed reaction is a tRNA with a 3' CCA end + 2 CTP + ATP = a tRNA with a 3' CCACCA end + 3 diphosphate. Catalyzes the addition and repair of the essential 3'-terminal CCA sequence in tRNAs without using a nucleic acid template. Adds these three nucleotides in the order of C, C, and A to the tRNA nucleotide-73, using CTP and ATP as substrates and producing inorganic pyrophosphate. tRNA 3'-terminal CCA addition is required both for tRNA processing and repair. Also involved in tRNA surveillance by mediating tandem CCA addition to generate a CCACCA at the 3' terminus of unstable tRNAs. While stable tRNAs receive only 3'-terminal CCA, unstable tRNAs are marked with CCACCA and rapidly degraded. The sequence is that of Multifunctional CCA protein from Neisseria gonorrhoeae (strain NCCP11945).